Consider the following 678-residue polypeptide: SPS-sensor component PTR3 (678 aa).

2 disordered regions span residues 111–158 (TGQG…SDPT) and 179–211 (ANTE…SSLL). Low complexity predominate over residues 127–144 (TSPSSSSLSLTPSRSSST). Residues 149–158 (ADNKTLSDPT) show a composition bias toward basic and acidic residues. Residues 179–194 (ANTEVGSDHPLTTGTT) are compositionally biased toward polar residues.

Homodimer. Component of the plasma membrane SPS (SSY1-PTR3-SSY5) amino acid sensor complex. Interacts directly with SSY1 and SSY5. Hyperphosphorylated in response to extracellular amino acids and dependent on the amino acid sensor component SSY1. Phosphorylation is positively regulated by casein kinases YCK1 and YCK2, and negatively regulated by phosphatase PP2A regulatory subunit RTS1.

The protein localises to the cell membrane. In terms of biological role, component of the SPS-sensor system, which regulates the expression of several amino acid-metabolizing enzymes and amino acid- and peptide-permeases in response to extracellular amino acid levels by controlling the activity of two transcription factors, STP1 and STP2. The sequence is that of SPS-sensor component PTR3 (PTR3) from Saccharomyces cerevisiae (strain ATCC 204508 / S288c) (Baker's yeast).